The sequence spans 435 residues: Trigger factor (435 aa).

A PPIase FKBP-type domain is found at 164–249 (GDFAKFDFEG…LHEIQGKKAG (86 aa)).

This sequence belongs to the FKBP-type PPIase family. Tig subfamily.

The protein localises to the cytoplasm. The catalysed reaction is [protein]-peptidylproline (omega=180) = [protein]-peptidylproline (omega=0). Involved in protein export. Acts as a chaperone by maintaining the newly synthesized protein in an open conformation. Functions as a peptidyl-prolyl cis-trans isomerase. The sequence is that of Trigger factor from Campylobacter fetus subsp. fetus (strain 82-40).